The following is a 258-amino-acid chain: uncharacterized protein (258 aa).

Residues 16-148 (EAFDSFEYAE…VLRALNFDTH (133 aa)) form the Cyclin N-terminal domain.

Belongs to the cyclin family. Cyclin L subfamily.

Its subcellular location is the cytoplasm. The protein localises to the nucleus. This is an uncharacterized protein from Schizosaccharomyces pombe (strain 972 / ATCC 24843) (Fission yeast).